Reading from the N-terminus, the 61-residue chain is Small ribosomal subunit protein uS14 (61 aa).

Zn(2+) is bound by residues Cys24, Cys27, Cys40, and Cys43.

The protein belongs to the universal ribosomal protein uS14 family. Zinc-binding uS14 subfamily. As to quaternary structure, part of the 30S ribosomal subunit. Contacts proteins S3 and S10. Zn(2+) is required as a cofactor.

Binds 16S rRNA, required for the assembly of 30S particles and may also be responsible for determining the conformation of the 16S rRNA at the A site. This Rhodococcus erythropolis (strain PR4 / NBRC 100887) protein is Small ribosomal subunit protein uS14.